The chain runs to 280 residues: Tryptophan 2,3-dioxygenase (280 aa).

Substrate contacts are provided by residues 49–53 (FIIIH), Y111, and R115. H238 is a heme binding site. T252 provides a ligand contact to substrate.

Belongs to the tryptophan 2,3-dioxygenase family. As to quaternary structure, homotetramer. Requires heme as cofactor.

The enzyme catalyses L-tryptophan + O2 = N-formyl-L-kynurenine. Its pathway is amino-acid degradation; L-tryptophan degradation via kynurenine pathway; L-kynurenine from L-tryptophan: step 1/2. In terms of biological role, heme-dependent dioxygenase that catalyzes the oxidative cleavage of the L-tryptophan (L-Trp) pyrrole ring and converts L-tryptophan to N-formyl-L-kynurenine. Catalyzes the oxidative cleavage of the indole moiety. This chain is Tryptophan 2,3-dioxygenase, found in Geobacillus thermodenitrificans (strain NG80-2).